The primary structure comprises 496 residues: Histidine--tRNA ligase (496 aa).

It belongs to the class-II aminoacyl-tRNA synthetase family. As to quaternary structure, homodimer.

It localises to the cytoplasm. The enzyme catalyses tRNA(His) + L-histidine + ATP = L-histidyl-tRNA(His) + AMP + diphosphate + H(+). This Bartonella bacilliformis (strain ATCC 35685 / KC583 / Herrer 020/F12,63) protein is Histidine--tRNA ligase.